A 379-amino-acid polypeptide reads, in one-letter code: ATPase ASNA1 homolog (379 aa).

Residues 1 to 20 (MSEDESNSVSCSLSLESDGY) form a disordered region. Low complexity predominate over residues 7-18 (NSVSCSLSLESD). 46–53 (KGGVGKTT) contacts ATP. Asp75 is a catalytic residue. ATP is bound by residues Glu246 and Asn273.

This sequence belongs to the arsA ATPase family. As to quaternary structure, homodimer.

It is found in the cytoplasm. The protein localises to the endoplasmic reticulum. Its function is as follows. ATPase required for the post-translational delivery of tail-anchored (TA) proteins to the endoplasmic reticulum. Recognizes and selectively binds the transmembrane domain of TA proteins in the cytosol. This complex then targets to the endoplasmic reticulum by membrane-bound receptors, where the tail-anchored protein is released for insertion. This process is regulated by ATP binding and hydrolysis. ATP binding drives the homodimer towards the closed dimer state, facilitating recognition of newly synthesized TA membrane proteins. ATP hydrolysis is required for insertion. Subsequently, the homodimer reverts towards the open dimer state, lowering its affinity for the membrane-bound receptor, and returning it to the cytosol to initiate a new round of targeting. This is ATPase ASNA1 homolog from Plasmodium falciparum (isolate 3D7).